The sequence spans 557 residues: Protein NRT1/ PTR FAMILY 2.6 (557 aa).

Helical transmembrane passes span Ile-26–Leu-46, Ile-67–Asp-87, Phe-89–Leu-109, Asn-136–Leu-156, Phe-177–Val-197, Ile-203–Phe-223, Ile-318–Leu-338, Ile-356–Asn-376, Val-398–Lys-418, Val-439–Gly-459, Ser-478–Ile-498, and Tyr-518–Phe-538.

The protein belongs to the major facilitator superfamily. Proton-dependent oligopeptide transporter (POT/PTR) (TC 2.A.17) family. Expressed in roots.

Its subcellular location is the membrane. Its function is as follows. Transporter involved in a passive nitrate efflux. The protein is Protein NRT1/ PTR FAMILY 2.6 (NPF2.6) of Arabidopsis thaliana (Mouse-ear cress).